The sequence spans 238 residues: Ribonuclease PH (238 aa).

Phosphate contacts are provided by residues Arg-86 and 124–126; that span reads GTR.

Belongs to the RNase PH family. As to quaternary structure, homohexameric ring arranged as a trimer of dimers.

It catalyses the reaction tRNA(n+1) + phosphate = tRNA(n) + a ribonucleoside 5'-diphosphate. Its function is as follows. Phosphorolytic 3'-5' exoribonuclease that plays an important role in tRNA 3'-end maturation. Removes nucleotide residues following the 3'-CCA terminus of tRNAs; can also add nucleotides to the ends of RNA molecules by using nucleoside diphosphates as substrates, but this may not be physiologically important. Probably plays a role in initiation of 16S rRNA degradation (leading to ribosome degradation) during starvation. The sequence is that of Ribonuclease PH from Brucella abortus (strain S19).